We begin with the raw amino-acid sequence, 491 residues long: UDP-N-acetylmuramate--L-alanine ligase (491 aa).

126–132 (GTHGKTT) is an ATP binding site.

This sequence belongs to the MurCDEF family.

The protein resides in the cytoplasm. It carries out the reaction UDP-N-acetyl-alpha-D-muramate + L-alanine + ATP = UDP-N-acetyl-alpha-D-muramoyl-L-alanine + ADP + phosphate + H(+). It participates in cell wall biogenesis; peptidoglycan biosynthesis. Its function is as follows. Cell wall formation. This Escherichia coli (strain SE11) protein is UDP-N-acetylmuramate--L-alanine ligase.